Reading from the N-terminus, the 215-residue chain is Large ribosomal subunit protein bL25 (215 aa).

The interval 190–215 (VLTDAEEETDETPEEPEAIRQKGDEE) is disordered. Residues 193–205 (DAEEETDETPEEP) show a composition bias toward acidic residues. Over residues 206–215 (EAIRQKGDEE) the composition is skewed to basic and acidic residues.

The protein belongs to the bacterial ribosomal protein bL25 family. CTC subfamily. In terms of assembly, part of the 50S ribosomal subunit; part of the 5S rRNA/L5/L18/L25 subcomplex. Contacts the 5S rRNA. Binds to the 5S rRNA independently of L5 and L18.

In terms of biological role, this is one of the proteins that binds to the 5S RNA in the ribosome where it forms part of the central protuberance. This chain is Large ribosomal subunit protein bL25, found in Maricaulis maris (strain MCS10) (Caulobacter maris).